The following is a 403-amino-acid chain: Alkaline protease 1 (403 aa).

The first 21 residues, 1–21, serve as a signal peptide directing secretion; the sequence is MQSIKRTLLLLGALLPAALAA. A propeptide spanning residues 22–125 is cleaved from the precursor; it reads PAREPHPSSN…QIWYLDALTT (104 aa). Positions 36 to 120 constitute an Inhibitor I9 domain; that stretch reads KYIITFKSGI…HVEEDQIWYL (85 aa). One can recognise a Peptidase S8 domain in the interval 130–403; the sequence is PWGLGSISHK…PNKLAYNGAA (274 aa). Active-site charge relay system residues include Asp162 and His193. 2 N-linked (GlcNAc...) asparagine glycosylation sites follow: Asn253 and Asn307. Residue Ser349 is the Charge relay system of the active site.

This sequence belongs to the peptidase S8 family.

The protein resides in the secreted. The catalysed reaction is Hydrolysis of proteins with broad specificity, and of Bz-Arg-OEt &gt; Ac-Tyr-OEt. Does not hydrolyze peptide amides.. Its function is as follows. Secreted alkaline protease that allows assimilation of proteinaceous substrates. The chain is Alkaline protease 1 (alp1) from Aspergillus clavatus (strain ATCC 1007 / CBS 513.65 / DSM 816 / NCTC 3887 / NRRL 1 / QM 1276 / 107).